We begin with the raw amino-acid sequence, 421 residues long: Imidazolonepropionase (421 aa).

His-81 and His-83 together coordinate Fe(3+). The Zn(2+) site is built by His-81 and His-83. Residues Arg-90, Tyr-153, and His-186 each coordinate 4-imidazolone-5-propanoate. An N-formimidoyl-L-glutamate-binding site is contributed by Tyr-153. Residue His-251 participates in Fe(3+) binding. Residue His-251 coordinates Zn(2+). Glu-254 provides a ligand contact to 4-imidazolone-5-propanoate. Asp-326 serves as a coordination point for Fe(3+). Asp-326 contributes to the Zn(2+) binding site. Asn-328 and Gly-330 together coordinate N-formimidoyl-L-glutamate. A 4-imidazolone-5-propanoate-binding site is contributed by Ser-331.

Belongs to the metallo-dependent hydrolases superfamily. HutI family. The cofactor is Zn(2+). Requires Fe(3+) as cofactor.

Its subcellular location is the cytoplasm. The catalysed reaction is 4-imidazolone-5-propanoate + H2O = N-formimidoyl-L-glutamate. It functions in the pathway amino-acid degradation; L-histidine degradation into L-glutamate; N-formimidoyl-L-glutamate from L-histidine: step 3/3. Catalyzes the hydrolytic cleavage of the carbon-nitrogen bond in imidazolone-5-propanoate to yield N-formimidoyl-L-glutamate. It is the third step in the universal histidine degradation pathway. This Streptococcus pyogenes serotype M6 (strain ATCC BAA-946 / MGAS10394) protein is Imidazolonepropionase.